Here is a 154-residue protein sequence, read N- to C-terminus: D-aminoacyl-tRNA deacylase (154 aa).

The Gly-cisPro motif, important for rejection of L-amino acids signature appears at 142–143 (GP).

Belongs to the DTD family. Homodimer.

The protein resides in the cytoplasm. The catalysed reaction is glycyl-tRNA(Ala) + H2O = tRNA(Ala) + glycine + H(+). The enzyme catalyses a D-aminoacyl-tRNA + H2O = a tRNA + a D-alpha-amino acid + H(+). Functionally, an aminoacyl-tRNA editing enzyme that deacylates mischarged D-aminoacyl-tRNAs. Also deacylates mischarged glycyl-tRNA(Ala), protecting cells against glycine mischarging by AlaRS. Acts via tRNA-based rather than protein-based catalysis; rejects L-amino acids rather than detecting D-amino acids in the active site. By recycling D-aminoacyl-tRNA to D-amino acids and free tRNA molecules, this enzyme counteracts the toxicity associated with the formation of D-aminoacyl-tRNA entities in vivo and helps enforce protein L-homochirality. The chain is D-aminoacyl-tRNA deacylase (DTD1) from Yarrowia lipolytica (strain CLIB 122 / E 150) (Yeast).